The following is a 396-amino-acid chain: Protein NDRG1-A (396 aa).

The segment at 326 to 396 is disordered; the sequence is RSRTGSAASS…NSPKSMEVSC (71 aa). Over residues 327–340 the composition is skewed to low complexity; it reads SRTGSAASSSSQDG. 4 consecutive repeat copies span residues 340-349, 350-359, 360-369, and 370-379. The tract at residues 340 to 379 is 4 X 10 AA tandem repeats of G-[NS]-R-S-R-[AS]-H-T-[DGN]-[DET]; sequence GNRSRSHTNEGSRSRSHTGDGNRSRAHTGDGNRSRSHTDT. Basic and acidic residues predominate over residues 346-377; sequence HTNEGSRSRSHTGDGNRSRAHTGDGNRSRSHT. Residues 378-390 show a composition bias toward polar residues; it reads DTNNINSDQNSPK.

This sequence belongs to the NDRG family.

Functionally, may be involved in pronephros development, after specification of the pronephros. This chain is Protein NDRG1-A (ndrg1-a), found in Xenopus laevis (African clawed frog).